The following is a 128-amino-acid chain: Gastrotropin (128 aa).

An N-acetylalanine modification is found at A2.

Belongs to the calycin superfamily. Fatty-acid binding protein (FABP) family. Expressed in ovary granulosa and luteal cells.

Its subcellular location is the cytoplasm. The protein resides in the membrane. In terms of biological role, binds to bile acids and is involved in enterohepatic bile acid metabolism. Required for efficient apical to basolateral transport of conjugated bile acids in ileal enterocytes. Stimulates gastric acid and pepsinogen secretion. The chain is Gastrotropin (Fabp6) from Mus musculus (Mouse).